The primary structure comprises 468 residues: Neuronal acetylcholine receptor subunit alpha-5 (468 aa).

The first 22 residues, 1-22, serve as a signal peptide directing secretion; that stretch reads MAARGSGPRALRLLLLVQLVAG. The Extracellular segment spans residues 23-254; the sequence is RCGLAGAAGG…VIKRLPLFYT (232 aa). N-linked (GlcNAc...) asparagine glycosylation is found at Asn155, Asn183, and Asn229. A disulfide bond links Cys170 and Cys184. Cysteines 234 and 235 form a disulfide. 3 consecutive transmembrane segments (helical) span residues 255–275, 282–302, and 317–337; these read LFLIIPCIGLSFLTVLVFYLP, ICLCTSVLVSLTVFLLVIEEI, and LVFTMIFVTLSIMVTVFAINI. At 338 to 429 the chain is on the cytoplasmic side; that stretch reads HHRSSSTHNA…WKFIAQVLDR (92 aa). The chain crosses the membrane as a helical span at residues 430–451; sequence MFLWTFLFVSIVGSLGLFVPVI. At 452–468 the chain is on the extracellular side; the sequence is YKWANILIPVHIGNANK.

It belongs to the ligand-gated ion channel (TC 1.A.9) family. Acetylcholine receptor (TC 1.A.9.1) subfamily. Alpha-5/CHRNA5 sub-subfamily. Neuronal AChR that forms heteropentamers composed of two different type of subunits: alpha and non-alpha (beta). CHRNA5/alpha-5 subunit is only able to form functional nAChRs when co-assembled with another alpha subunit, can be combined to CHRNA4/alpha-4 or CHRNA3/alpha-3 and CHRNB4/beta-4 or CHRNB2/beta-2 to give rise to functional receptors. Interacts with LYPD6.

The protein localises to the synaptic cell membrane. It localises to the cell membrane. It catalyses the reaction Ca(2+)(in) = Ca(2+)(out). It carries out the reaction K(+)(in) = K(+)(out). The enzyme catalyses Na(+)(in) = Na(+)(out). With respect to regulation, activated by a myriad of ligands such as acetylcholine, cytisine, nicotine, choline and epibatidine. Component of neuronal acetylcholine receptors (nAChRs) that function as pentameric, ligand-gated cation channels with high calcium permeability among other activities. nAChRs are excitatory neurotrasnmitter receptors formed by a collection of nAChR subunits known to mediate synaptic transmission in the nervous system and the neuromuscular junction. Each nAchR subunit confers differential attributes to channel properties, including activation, deactivation and desensitization kinetics, pH sensitivity, cation permeability, and binding to allosteric modulators. Has an accessory rather than functional role and is only able to form functional nAChRs when co-assembled with another beta subunit. Participates in pentameric assemblies along with CHRNA3, CHRNA4, CHRNB2 and CHRNB4. Increases receptor sensitivity to acetylcholine and nicotine when associated with CHRNA4 and CHRNB2. Plays a role in nicotine addiction. This is Neuronal acetylcholine receptor subunit alpha-5 from Homo sapiens (Human).